A 213-amino-acid chain; its full sequence is Pyridoxine/pyridoxamine 5'-phosphate oxidase (213 aa).

Substrate contacts are provided by residues 8-11 (RREY) and Lys66. FMN contacts are provided by residues 61–66 (RIVLLK), 76–77 (YT), Arg82, Lys83, and Gln105. The substrate site is built by Tyr123, Arg127, and Ser131. Residues 140-141 (QS) and Trp185 contribute to the FMN site. 191–193 (RLH) contributes to the substrate binding site. Arg195 serves as a coordination point for FMN.

It belongs to the pyridoxamine 5'-phosphate oxidase family. Homodimer. FMN is required as a cofactor.

It catalyses the reaction pyridoxamine 5'-phosphate + O2 + H2O = pyridoxal 5'-phosphate + H2O2 + NH4(+). The enzyme catalyses pyridoxine 5'-phosphate + O2 = pyridoxal 5'-phosphate + H2O2. Its pathway is cofactor metabolism; pyridoxal 5'-phosphate salvage; pyridoxal 5'-phosphate from pyridoxamine 5'-phosphate: step 1/1. The protein operates within cofactor metabolism; pyridoxal 5'-phosphate salvage; pyridoxal 5'-phosphate from pyridoxine 5'-phosphate: step 1/1. Functionally, catalyzes the oxidation of either pyridoxine 5'-phosphate (PNP) or pyridoxamine 5'-phosphate (PMP) into pyridoxal 5'-phosphate (PLP). This is Pyridoxine/pyridoxamine 5'-phosphate oxidase from Pseudoalteromonas atlantica (strain T6c / ATCC BAA-1087).